Reading from the N-terminus, the 315-residue chain is tRNA U34 carboxymethyltransferase (315 aa).

Carboxy-S-adenosyl-L-methionine contacts are provided by residues Lys79, Trp93, Lys98, Gly117, 142 to 144, 169 to 170, Tyr193, and Arg307; these read DPS and VE.

It belongs to the class I-like SAM-binding methyltransferase superfamily. CmoB family. Homotetramer.

The enzyme catalyses carboxy-S-adenosyl-L-methionine + 5-hydroxyuridine(34) in tRNA = 5-carboxymethoxyuridine(34) in tRNA + S-adenosyl-L-homocysteine + H(+). Its function is as follows. Catalyzes carboxymethyl transfer from carboxy-S-adenosyl-L-methionine (Cx-SAM) to 5-hydroxyuridine (ho5U) to form 5-carboxymethoxyuridine (cmo5U) at position 34 in tRNAs. This chain is tRNA U34 carboxymethyltransferase, found in Helicobacter hepaticus (strain ATCC 51449 / 3B1).